Reading from the N-terminus, the 200-residue chain is Arylesterase (200 aa).

Residues 1 to 19 (MIRLLSLVLFFCLSAASQA) form the signal peptide. Catalysis depends on Ser-29, which acts as the Nucleophile. Residues Asp-176 and His-179 contribute to the active site.

It belongs to the 'GDSL' lipolytic enzyme family. In terms of assembly, homodimer.

It carries out the reaction a phenyl acetate + H2O = a phenol + acetate + H(+). Its function is as follows. Favors the hydrolysis of several arylesters. This Vibrio mimicus protein is Arylesterase.